We begin with the raw amino-acid sequence, 511 residues long: 2,3-bisphosphoglycerate-independent phosphoglycerate mutase (511 aa).

2 residues coordinate Mn(2+): aspartate 14 and serine 64. The active-site Phosphoserine intermediate is serine 64. Residues histidine 125, 155–156, arginine 187, arginine 193, 259–262, and lysine 333 contribute to the substrate site; these read RD and RADR. 5 residues coordinate Mn(2+): aspartate 400, histidine 404, aspartate 441, histidine 442, and histidine 460.

It belongs to the BPG-independent phosphoglycerate mutase family. Monomer. Requires Mn(2+) as cofactor.

The catalysed reaction is (2R)-2-phosphoglycerate = (2R)-3-phosphoglycerate. The protein operates within carbohydrate degradation; glycolysis; pyruvate from D-glyceraldehyde 3-phosphate: step 3/5. Functionally, catalyzes the interconversion of 2-phosphoglycerate and 3-phosphoglycerate. This is 2,3-bisphosphoglycerate-independent phosphoglycerate mutase from Idiomarina loihiensis (strain ATCC BAA-735 / DSM 15497 / L2-TR).